An 89-amino-acid chain; its full sequence is Large ribosomal subunit protein uL29c (89 aa).

The protein belongs to the universal ribosomal protein uL29 family.

It is found in the plastid. Its subcellular location is the chloroplast. The protein is Large ribosomal subunit protein uL29c (rpl29) of Trieres chinensis (Marine centric diatom).